We begin with the raw amino-acid sequence, 504 residues long: Anaerobic nitric oxide reductase transcription regulator NorR (504 aa).

A 4-aspartylphosphate modification is found at aspartate 57. The Sigma-54 factor interaction domain maps to 187–416 (MIGLSPGMTQ…LEHAIHRAVV (230 aa)). Residues 215-222 (GETGTGKE) and 278-287 (ADNGTLFLDE) contribute to the ATP site. A DNA-binding region (H-T-H motif) is located at residues 479-498 (WAACARMLETDVANLHRLAK).

It participates in nitrogen metabolism; nitric oxide reduction. Its function is as follows. Required for the expression of anaerobic nitric oxide (NO) reductase, acts as a transcriptional activator for at least the norVW operon. Activation also requires sigma-54. This Escherichia coli O157:H7 protein is Anaerobic nitric oxide reductase transcription regulator NorR.